Consider the following 613-residue polypeptide: Glutaminase 1 (613 aa).

The interval 33-315 is glutaminase; the sequence is GAVADYIPEL…LSSHYDLHML (283 aa). Substrate is bound by residues Ser-75, Asn-124, Glu-168, Asn-175, Tyr-199, Tyr-251, and Val-269. The STAS domain occupies 345 to 457; that stretch reads REILAAHEQE…LDTAIEWAED (113 aa). A nucleoside 3',5'-cyclic phosphate is bound at residue 480–595; the sequence is LLEGLSADEL…ERIMRNLAQL (116 aa).

Belongs to the glutaminase family. As to quaternary structure, homotetramer.

It catalyses the reaction L-glutamine + H2O = L-glutamate + NH4(+). The sequence is that of Glutaminase 1 (glsA1) from Bradyrhizobium diazoefficiens (strain JCM 10833 / BCRC 13528 / IAM 13628 / NBRC 14792 / USDA 110).